Consider the following 88-residue polypeptide: Small ribosomal subunit protein uS15c (88 aa).

Belongs to the universal ribosomal protein uS15 family. Part of the 30S ribosomal subunit.

The protein resides in the plastid. The protein localises to the chloroplast. The polypeptide is Small ribosomal subunit protein uS15c (rps15) (Arabidopsis thaliana (Mouse-ear cress)).